Here is a 248-residue protein sequence, read N- to C-terminus: 14-3-3 protein homolog 2 (248 aa).

Belongs to the 14-3-3 family.

This chain is 14-3-3 protein homolog 2, found in Echinococcus multilocularis (Fox tapeworm).